The following is a 47-amino-acid chain: Large ribosomal subunit protein bL32c (47 aa).

The protein belongs to the bacterial ribosomal protein bL32 family.

The protein localises to the plastid. This is Large ribosomal subunit protein bL32c (rpl32) from Prototheca wickerhamii.